Reading from the N-terminus, the 191-residue chain is Somatotropin (191 aa).

His20 is a Zn(2+) binding site. Cys53 and Cys164 are oxidised to a cystine. Position 173 (Glu173) interacts with Zn(2+). A disulfide bridge connects residues Cys181 and Cys189.

Belongs to the somatotropin/prolactin family.

Its subcellular location is the secreted. Functionally, growth hormone plays an important role in growth control and is involved in the regulation of several anabolic processes. Implicated as an osmoregulatory substance important for seawater adaptation. The polypeptide is Somatotropin (GH) (Chelonia mydas (Green sea-turtle)).